We begin with the raw amino-acid sequence, 264 residues long: MESGKMASPKSMPKDAQMMAQILKDMGITEYEPRVINQMLEFAFRYVTTILDDAKIYSSHAKKPTVDADDVRLAIQCRADQSFTSPPPRDFLLDIARQRNQTPLPLIKPYSGPRLPPDRYCLTAPNYRLKSLQKKAPTPAGRITVPRLSVGSVSSRPSTPTLGTPTPQAMSVSTKVGTPMSLTGQRFTVQMPASQSPAVKASIPATPAVQNVLINPSLIGSKNILITTNMVSQNTANESANALKRKREEEDDDDDDDDDDYDNL.

Lysine 5 is modified (N6-acetyllysine). Residues serine 149, serine 152, serine 155, and serine 158 each carry the phosphoserine modification. The interval 150-174 is disordered; it reads VGSVSSRPSTPTLGTPTPQAMSVST. The segment covering 151 to 174 has biased composition (polar residues); that stretch reads GSVSSRPSTPTLGTPTPQAMSVST. Phosphothreonine is present on residues threonine 159, threonine 161, threonine 164, and threonine 178. Phosphoserine occurs at positions 181 and 196. The disordered stretch occupies residues 233-264; that stretch reads QNTANESANALKRKREEEDDDDDDDDDDYDNL. The span at 249-264 shows a compositional bias: acidic residues; sequence EEDDDDDDDDDDYDNL.

The protein belongs to the TAF9 family. As to quaternary structure, component of the TFIID basal transcription factor complex, composed of TATA-box-binding protein TBP, and a number of TBP-associated factors (TAFs), including TAF1, TAF2, TAF3, TAF4, TAF5, TAF6, TAF7, TAF8, TAF9, TAF10, TAF11, TAF12 and TAF13. Component of the TATA-binding protein-free TAF complex (TFTC), the PCAF histone acetylase complex and the STAGA transcription coactivator-HAT complex. The PCAF complex consists at least of TADA2L/ADA2, SUPT3H/SPT3, TADA3L/ADA3, TAF5L/PAF65-beta, TAF6L/PAF65-alpha, TAF10/TAFII30, TAF12/TAFII20, TAF9/TAFII31 and TRRAP. The STAGA transcription coactivator-HAT complex consists at least of SUPT3H, GCN5L2, SUPT7L, TAF5L, TAF6L, TADA3L, TAD1L, TAF10, TAF12, TRRAP and TAF9. Binds N-terminal domain of p53/TP53 which is essential for transcription. Component of some MLL1/MLL complex, at least composed of the core components KMT2A/MLL1, ASH2L, HCFC1/HCF1, WDR5 and RBBP5, as well as the facultative components BACC1, CHD8, E2F6, HSP70, INO80C, KANSL1, LAS1L, MAX, MCRS1, MGA, MYST1/MOF, PELP1, PHF20, PRP31, RING2, RUVB1/TIP49A, RUVB2/TIP49B, SENP3, TAF1, TAF4, TAF6, TAF7, TAF9 and TEX10. Binds TFIIB and the Herpes simplex virus activator VP16. Forms a heterodimer with TAF6 in a complex with the TAF4B-TAF12 heterodimer. Also interacts with TAF5. Binds directly DNA. Increased DNA binding when complexed with TAF6.

The protein resides in the nucleus. Its function is as follows. The TFIID basal transcription factor complex plays a major role in the initiation of RNA polymerase II (Pol II)-dependent transcription. TFIID recognizes and binds promoters with or without a TATA box via its subunit TBP, a TATA-box-binding protein, and promotes assembly of the pre-initiation complex (PIC). The TFIID complex consists of TBP and TBP-associated factors (TAFs), including TAF1, TAF2, TAF3, TAF4, TAF5, TAF6, TAF7, TAF8, TAF9, TAF10, TAF11, TAF12 and TAF13. TAF9 is also a component of the TBP-free TAFII complex (TFTC), the PCAF histone acetylase complex and the STAGA transcription coactivator-HAT complex. TAF9 and its paralog TAF9B are involved in transcriptional activation as well as repression of distinct but overlapping sets of genes. Essential for cell viability. May have a role in gene regulation associated with apoptosis. The sequence is that of Transcription initiation factor TFIID subunit 9 from Rattus norvegicus (Rat).